A 302-amino-acid chain; its full sequence is Sulfate adenylyltransferase subunit 2 (302 aa).

The protein belongs to the PAPS reductase family. CysD subfamily. In terms of assembly, heterodimer composed of CysD, the smaller subunit, and CysN.

The catalysed reaction is sulfate + ATP + H(+) = adenosine 5'-phosphosulfate + diphosphate. Its pathway is sulfur metabolism; hydrogen sulfide biosynthesis; sulfite from sulfate: step 1/3. Functionally, with CysN forms the ATP sulfurylase (ATPS) that catalyzes the adenylation of sulfate producing adenosine 5'-phosphosulfate (APS) and diphosphate, the first enzymatic step in sulfur assimilation pathway. APS synthesis involves the formation of a high-energy phosphoric-sulfuric acid anhydride bond driven by GTP hydrolysis by CysN coupled to ATP hydrolysis by CysD. In Salmonella arizonae (strain ATCC BAA-731 / CDC346-86 / RSK2980), this protein is Sulfate adenylyltransferase subunit 2.